The following is a 1912-amino-acid chain: Methylcytosine dioxygenase TET2 (1912 aa).

Over residues 1-11 the composition is skewed to basic and acidic residues; the sequence is MEQDRTTHAEG. The disordered stretch occupies residues 1–86; the sequence is MEQDRTTHAE…PHEDRGYSRC (86 aa). Residues serine 15 and serine 23 each carry the phosphoserine modification. Positions 53-74 are enriched in polar residues; the sequence is TKWQSSQSCYGISHMKGSQSSH. A phosphoserine mark is found at serine 76 and serine 97. Disordered stretches follow at residues 112-166, 340-359, 367-388, 429-470, 673-723, 832-862, 907-966, and 1009-1052; these read LDQK…FPTR, DRNLQASHGSSEQYSKQKET, SSKFPKDSISPTTVTPPSQSLL, IDHQ…PEKS, PQTQ…DKQR, EQAQKPQQASSLQGLKDRSQGESPAPPAEAA, QEQQ…NGQP, and ESEN…EGCN. Composition is skewed to polar residues over residues 135 to 158, 340 to 353, 367 to 387, 434 to 447, and 673 to 689; these read SRQPNVSGLSDNGEPVTSTTQESS, DRNLQASHGSSEQY, SSKFPKDSISPTTVTPPSQSL, KTSSSQSLNPSVHT, and PQTQASQTPASQNSNFP. Residues 690–701 show a composition bias toward low complexity; it reads QICQQQQQQQLQ. Composition is skewed to polar residues over residues 707–719 and 832–844; these read QMPQTFSHLQGSN and EQAQKPQQASSLQ. Positions 907 to 921 are enriched in low complexity; the sequence is QEQQQTQQSQPGHNQ. Polar residues-rich tracts occupy residues 944 to 966 and 1036 to 1046; these read PQENMSSRIKQEISSPSRDNGQP and SDTPGEQSQNG. Residue serine 1036 is modified to Phosphoserine. Residues cysteine 1048, cysteine 1106, histidine 1132, and cysteine 1134 each contribute to the Zn(2+) site. Position 1174 (arginine 1174) interacts with 2-oxoglutarate. The Zn(2+) site is built by cysteine 1184, cysteine 1186, cysteine 1202, and cysteine 1211. Residues 1203-1216 form an interaction with DNA region; it reads SWSMYYNGCKFARS. Residue lysine 1212 forms a Glycyl lysine isopeptide (Lys-Gly) (interchain with G-Cter in ubiquitin) linkage. Position 1271 (cysteine 1271) interacts with Zn(2+). A 2-oxoglutarate-binding site is contributed by cysteine 1287. Position 1293 (histidine 1293) interacts with Zn(2+). Histidine 1295 and aspartate 1297 together coordinate Fe cation. Asparagine 1300 contacts substrate. A 2-oxoglutarate-binding site is contributed by histidine 1329. Disordered stretches follow at residues 1379–1414 and 1444–1514; these read KKKAEPKKAKTKKAARKRSSLENCSSRTEKGKSSSH and LQRH…HTSD. The span at 1387 to 1396 shows a compositional bias: basic residues; sequence AKTKKAARKR. Residues 1456–1473 show a composition bias toward pro residues; sequence QPQPPQPQPQTTPQPQPQ. The span at 1480-1512 shows a compositional bias: polar residues; the sequence is GNSQSVGSHCSGSTSVYTRQPTPHSPYPSSAHT. Position 1795 (histidine 1795) interacts with Fe cation. 1810–1812 serves as a coordination point for 2-oxoglutarate; that stretch reads RIS. 1816–1818 contributes to the substrate binding site; the sequence is YRH. Histidine 1826 contributes to the Zn(2+) binding site. Basic and acidic residues predominate over residues 1842-1866; sequence EEECGKNGSDHVSQKNHGKQEKREP. Positions 1842–1871 are disordered; the sequence is EEECGKNGSDHVSQKNHGKQEKREPTGPQE.

The protein belongs to the TET family. In terms of assembly, interacts with HCFC1. Interacts with OGT. Interacts with PROSER1; this interaction mediates TET2 O-GlcNAcylation and stability by promoting the interaction between OGT and TET2. Directly interacts (via C-terminus) with the DCAF1 component of the CRL4(VprBP) E3 ubiquitin-protein ligase complex. It depends on Fe(2+) as a cofactor. Zn(2+) serves as cofactor. In terms of processing, may be glycosylated. It is unclear whether interaction with OGT leads to GlcNAcylation. According to a report, it is GlcNAcylated by OGT. In contrast, another group reports no GlcNAcylation by OGT in human ortholog. Post-translationally, monoubiquitinated at Lys-1212 by the DCX (DDB1-CUL4-X-box) E3 ubiquitin-protein ligase complex called CRL4(VprBP) or CUL4A-RBX1-DDB1-DCAF1/VPRBP complex; this modification promotes binding to DNA. Acetylated. In terms of tissue distribution, expressed in the brain, kidney, heart, lung, muscle and stomach. Expressed in germinal vesicle (GV) stage and MII-stage oocytes and in early embryos. Present in embryonic stem cells (ES cells).

It is found in the nucleus. The protein localises to the chromosome. The catalysed reaction is a 5-methyl-2'-deoxycytidine in DNA + 2-oxoglutarate + O2 = a 5-hydroxymethyl-2'-deoxycytidine in DNA + succinate + CO2. It carries out the reaction a 5-hydroxymethyl-2'-deoxycytidine in DNA + 2-oxoglutarate + O2 = a 5-formyl-2'-deoxycytidine in DNA + succinate + CO2 + H2O. The enzyme catalyses a 5-formyl-2'-deoxycytidine in DNA + 2-oxoglutarate + O2 = a 5-carboxyl-2'-deoxycytidine in DNA + succinate + CO2 + H(+). Its function is as follows. Dioxygenase that catalyzes the conversion of the modified genomic base 5-methylcytosine (5mC) into 5-hydroxymethylcytosine (5hmC) and plays a key role in active DNA demethylation. Has a preference for 5-hydroxymethylcytosine in CpG motifs. Also mediates subsequent conversion of 5hmC into 5-formylcytosine (5fC), and conversion of 5fC to 5-carboxylcytosine (5caC). Conversion of 5mC into 5hmC, 5fC and 5caC probably constitutes the first step in cytosine demethylation. Methylation at the C5 position of cytosine bases is an epigenetic modification of the mammalian genome which plays an important role in transcriptional regulation. In addition to its role in DNA demethylation, also involved in the recruitment of the O-GlcNAc transferase OGT to CpG-rich transcription start sites of active genes, thereby promoting histone H2B GlcNAcylation by OGT. In Mus musculus (Mouse), this protein is Methylcytosine dioxygenase TET2 (Tet2).